The following is a 564-amino-acid chain: MERDRITALKRSFEVEEIEPPNSTPPRRVQTPLLRATVASSSQKFQDLGVKNSEPAARLVDTLSQRSPKPSLRRVDLAGAKAPEPMSRRTELSIDISSKQVESTASTPGPSRFGLKRAEVLGHKTPEPVPRRTEITIVKPQESGLRRVETPASKAPEGSAMPVTDAAPKRVEIQVPKPAEAPNCPLPPQTLENSEAPMSQLQSRLEPRPPVTEVPYRNQEDSEVAPSCVVDMADNPRDAMLKQAPVSRNEKAPVDFGYVGIDSILEQMRRKAMKQGFEFNIMVVGQSGLGKSTLINTLFKSKISRKSVQPISEERIPKTIEIKSITHDIEEKGVRMKLTVIDTPGFGDHINNENCWQPIMKFINDQYEKYLQEEVNINRKKRIPDTRVHCCLYFIPATGHSLRPLDIEFMKRLSKVVNIVPVIAKADTLTLEERVYFKQRITSDLLSNGIDVYPQKEFDEAEDRLVNEKFREMIPFAVVGSDHEYQVNGKRILGRKTKWGTIEVENTTHCEFAYLRDLLIRTHMQNIKDITSNIHFEAYRVKRLNEGNSAMANGIEKEPETQEM.

M1 is subject to N-acetylmethionine. S12 carries the post-translational modification Phosphoserine. Residues T24 and T31 each carry the phosphothreonine modification. Disordered regions lie at residues 38-165 (VASS…PVTD) and 178-224 (PAEA…DSEV). The residue at position 44 (K44) is an N6-acetyllysine. Phosphoserine is present on residues S64, S67, and S71. Residues 95–109 (DISSKQVESTASTPG) show a composition bias toward polar residues. Residues 116–134 (KRAEVLGHKTPEPVPRRTE) show a composition bias toward basic and acidic residues. T125 carries the phosphothreonine modification. Residues 190 to 203 (TLENSEAPMSQLQS) show a composition bias toward polar residues. Y258 is modified (phosphotyrosine). Residues 275 to 546 (QGFEFNIMVV…EAYRVKRLNE (272 aa)) form the Septin-type G domain. The G1 motif stretch occupies residues 285–292 (GQSGLGKS). 285-292 (GQSGLGKS) is a binding site for GTP. Phosphoserine occurs at positions 307 and 312. GTP-binding positions include T319, G345, 425 to 433 (KADTLTLEE), G480, and R495. A G3 motif region spans residues 342 to 345 (DTPG). The G4 motif stretch occupies residues 424–427 (AKAD).

Belongs to the TRAFAC class TrmE-Era-EngA-EngB-Septin-like GTPase superfamily. Septin GTPase family. In terms of assembly, septins polymerize into heterooligomeric protein complexes that form filaments, and associate with cellular membranes, actin filaments, and microtubules. GTPase activity is required for filament formation. Interacts with SEPTIN2, SEPTIN6, SEPTIN7, SEPTIN11 and SEPTIN14. Interacts with RTKN and ARHGEF18. Expressed in the brain, mainly in the perikarya and processes of astrocytes in the cerebellum, dentate gyrus and corpus callosum (at protein level). In the sciatic nerve, highly expressed in Schwann cells (at protein level). Isoforms are differentially expressed in testes, kidney, liver, heart, spleen and brain. Undetectable in skeletal muscle.

The protein resides in the cytoplasm. It is found in the cytoskeleton. In terms of biological role, filament-forming cytoskeletal GTPase. May play a role in cytokinesis (Potential). In Rattus norvegicus (Rat), this protein is Septin-9.